We begin with the raw amino-acid sequence, 38 residues long: Toxin Lqh 8/6 (38 aa).

4 disulfide bridges follow: cysteine 2–cysteine 19, cysteine 5–cysteine 28, cysteine 16–cysteine 33, and cysteine 20–cysteine 35.

As to expression, expressed by the venom gland.

The protein resides in the secreted. Toxin with unknown function in healthy organisms. On glioma cells, interacts with chloride channels (probably ClC-3/CLCN3) and MMP2 at the surface of glioma cells. This complex is then internalized via caveolae, thus inhibiting the chloride channels necessary for cell shrinkage and tumor propagation. This Leiurus hebraeus (Hebrew deathstalker scorpion) protein is Toxin Lqh 8/6.